The primary structure comprises 43 residues: uncharacterized protein (43 aa).

Low complexity predominate over residues 1–37 (MIIKNNNNNNNNNNNNNNNNNNNNNNNNNNNNNNNNN). The segment at 1-43 (MIIKNNNNNNNNNNNNNNNNNNNNNNNNNNNNNNNNNIEIIIK) is disordered.

This is an uncharacterized protein from Dictyostelium discoideum (Social amoeba).